The sequence spans 1163 residues: NACHT, LRR and PYD domains-containing protein 5 (1163 aa).

3 stretches are compositionally biased toward basic and acidic residues: residues Met-1–Gly-42, Pro-56–Gly-94, and Pro-108–Ser-127. Positions Met-1–Asp-201 are disordered. Residues Glu-128 to Val-137 are compositionally biased toward polar residues. Residues Ala-153–Gly-173 show a composition bias toward basic and acidic residues. Residues His-243 to Leu-565 form the NACHT domain. Residue Gly-249 to Ser-256 coordinates ATP. LRR repeat units lie at residues Asn-801–Glu-822, Ser-830–Thr-851, Arg-858–Gly-878, Leu-887–Leu-906, Asn-915–Cys-935, Ala-944–Ala-964, Lys-972–Glu-993, Tyr-1001–Cys-1022, His-1029–Glu-1050, Ser-1058–Leu-1079, and His-1086–Ser-1107.

This sequence belongs to the NLRP family. Component of the subcortical maternal complex (SCMC), at least composed of NLRP5, KHDC3, OOEP, and TLE6. Within the complex, interacts with OOEP, KHDC3 and TLE6. The SCMC may facilitate translocation of its components between the nuclear and cytoplasmic compartments. As part of the SCMC interacts with the SCMC-associated protein ZBED3. As part of the SCMC interacts with the SCMC-associated protein CFL1/Cofilin-1. Interacts with PRKCE. Interacts with TUBB3 at cytoskeleton microtubules. In terms of processing, phosphorylated by PRKCE.

It localises to the cytoplasm. The protein localises to the cytoplasmic vesicle. Its subcellular location is the secretory vesicle. The protein resides in the cortical granule. It is found in the mitochondrion. It localises to the nucleus. The protein localises to the nucleolus. Its subcellular location is the golgi apparatus. Functionally, component of the subcortical maternal complex (SCMC), a multiprotein complex that plays a key role in early embryonic development. The SCMC complex is a structural constituent of cytoplasmic lattices, which consist in fibrous structures found in the cytoplasm of oocytes and preimplantation embryos. They are required to store maternal proteins critical for embryonic development, such as proteins that control epigenetic reprogramming of the preimplantation embryo, and prevent their degradation or activation. Required for the localization of cortical granules to the cortex of oocytes, via association with the cortical actin scaffold. Required for cortical actin clearance prior to oocyte exocytosis and prevention of polyspermy. Involved in regulating post-fertilization Ca(2+) release and endoplasmic reticulum storage (ER) storage via regulation of cellular localization. May be involved in the localization of mitochondria to the cytoplasm and perinuclear region in oocytes and early stage embryos, independent of its role in CPL formation. This chain is NACHT, LRR and PYD domains-containing protein 5, found in Mus musculus (Mouse).